Here is a 620-residue protein sequence, read N- to C-terminus: Translocator protein BipB (620 aa).

Residues 58-95 form a disordered region; it reads QCDAQPAAHDARLDDKPALRAPQERDAPPLGASDTGSR. The span at 66–84 shows a compositional bias: basic and acidic residues; sequence HDARLDDKPALRAPQERDA. Residues 309–339 are a coiled coil; sequence EMQAKREAELQKKSDEYQAQVKKAEEMQKTM. The next 3 membrane-spanning stretches (helical) occupy residues 355 to 375, 401 to 421, and 430 to 450; these read FAAA…GLAL, AILK…LVAC, and LAGA…AAFV.

This sequence belongs to the SctE/SipB/YopB family.

The protein localises to the secreted. It localises to the host membrane. Plays a role in the bacterium-induced formation of multinucleated giant cell (MNGC), which is formed after host cell fusion, as well as in the intercellular spreading of bacteria and in the induction of apoptosis in macrophages. May act in concert with other effector proteins to induce fusion of host cell membranes. The sequence is that of Translocator protein BipB (bipB) from Burkholderia pseudomallei (strain 1106a).